A 170-amino-acid polypeptide reads, in one-letter code: Regulator of ribonuclease activity A (170 aa).

Belongs to the RraA family. As to quaternary structure, homotrimer. Binds to both RNA-binding sites in the C-terminal region of Rne and to RhlB.

It localises to the cytoplasm. Functionally, globally modulates RNA abundance by binding to RNase E (Rne) and regulating its endonucleolytic activity. Can modulate Rne action in a substrate-dependent manner by altering the composition of the degradosome. Modulates RNA-binding and helicase activities of the degradosome. This chain is Regulator of ribonuclease activity A, found in Psychromonas ingrahamii (strain DSM 17664 / CCUG 51855 / 37).